Reading from the N-terminus, the 508-residue chain is Flavonoid 3',5'-hydroxylase 2 (508 aa).

Heme is bound at residue C443.

It belongs to the cytochrome P450 family. Heme serves as cofactor. In terms of tissue distribution, flowers.

It localises to the microsome. The protein resides in the endoplasmic reticulum. The enzyme catalyses a 3',5'-unsubstituted flavanone + 2 reduced [NADPH--hemoprotein reductase] + 2 O2 = a 3',5'-dihydroxyflavanone + 2 oxidized [NADPH--hemoprotein reductase] + 2 H2O + 2 H(+). It participates in pigment biosynthesis; anthocyanin biosynthesis. Its function is as follows. Catalyzes the 3'5'-hydroxylation of naringenin and eriodictyol to form 5,7,3,'4',5'-pentahydroxyflavanone and 3',5'-hydroxylation of dihydrokaempferol and dihydroquercetin to form dihydromyricetin. The chain is Flavonoid 3',5'-hydroxylase 2 (CYP75A3) from Petunia hybrida (Petunia).